Here is a 141-residue protein sequence, read N- to C-terminus: Heavy metal-associated isoprenylated plant protein 29 (141 aa).

Residues 1-59 (MEVPMDCPGCENKVRKALEKMNGVHDVQIDIKQQRVTVTGSAEQKKVLKVARNVTKRDI) form the HMA domain. 2 residues coordinate a metal cation: C7 and C10. C138 is subject to Cysteine methyl ester. A lipid anchor (S-farnesyl cysteine) is attached at C138. Residues 139 to 141 (SIM) constitute a propeptide, removed in mature form.

Belongs to the HIPP family.

In terms of biological role, heavy-metal-binding protein. This chain is Heavy metal-associated isoprenylated plant protein 29, found in Arabidopsis thaliana (Mouse-ear cress).